We begin with the raw amino-acid sequence, 163 residues long: Cyanate hydratase (163 aa).

Active-site residues include Arg-103, Glu-106, and Ser-129.

The protein belongs to the cyanase family.

It catalyses the reaction cyanate + hydrogencarbonate + 3 H(+) = NH4(+) + 2 CO2. Catalyzes the reaction of cyanate with bicarbonate to produce ammonia and carbon dioxide. The chain is Cyanate hydratase from Paracoccidioides brasiliensis (strain Pb18).